Consider the following 596-residue polypeptide: Pescadillo homolog (596 aa).

The 94-residue stretch at 347–440 (PTSTLFSEFV…ELVPANLYLP (94 aa)) folds into the BRCT domain. The segment at 449–552 (SPWGDSVGYD…EEKDLKLIMM (104 aa)) is disordered. The stretch at 460-596 (AAELAEEEAE…TKAKLKKLEN (137 aa)) forms a coiled coil. The span at 463–500 (LAEEEAESEEEEEVSDEAEGDEEATLAAEEDEEDEAEA) shows a compositional bias: acidic residues. Residues 501 to 510 (EELRAQKELE) are compositionally biased toward basic and acidic residues. The segment covering 519-529 (SEAADSAAPSK) has biased composition (low complexity).

This sequence belongs to the pescadillo family. In terms of assembly, component of the NOP7 complex, composed of ERB1, NOP7 and YTM1. The complex is held together by ERB1, which interacts with NOP7 via its N-terminal domain and with YTM1 via a high-affinity interaction between the seven-bladed beta-propeller domains of the 2 proteins. The NOP7 complex associates with the 66S pre-ribosome.

The protein resides in the nucleus. It localises to the nucleolus. It is found in the nucleoplasm. Its function is as follows. Component of the NOP7 complex, which is required for maturation of the 25S and 5.8S ribosomal RNAs and formation of the 60S ribosome. This chain is Pescadillo homolog, found in Eremothecium gossypii (strain ATCC 10895 / CBS 109.51 / FGSC 9923 / NRRL Y-1056) (Yeast).